Consider the following 84-residue polypeptide: Large ribosomal subunit protein bL27 (84 aa).

The segment at 1–21 is disordered; the sequence is MAHKKGQGSTRNGRDSHSKRL. Residues 12-21 show a composition bias toward basic and acidic residues; the sequence is NGRDSHSKRL.

This sequence belongs to the bacterial ribosomal protein bL27 family.

This chain is Large ribosomal subunit protein bL27, found in Methylacidiphilum infernorum (isolate V4) (Methylokorus infernorum (strain V4)).